We begin with the raw amino-acid sequence, 432 residues long: Probable imidazolonepropionase (432 aa).

4-imidazolone-5-propanoate-binding residues include Y159 and H192. Y159 serves as a coordination point for N-formimidoyl-L-glutamate. A Fe(3+)-binding site is contributed by H260. H260 is a Zn(2+) binding site. Residue E263 coordinates 4-imidazolone-5-propanoate. Position 334 (D334) interacts with Fe(3+). A Zn(2+)-binding site is contributed by D334. N336 contributes to the N-formimidoyl-L-glutamate binding site.

It belongs to the metallo-dependent hydrolases superfamily. HutI family. Requires Zn(2+) as cofactor. It depends on Fe(3+) as a cofactor.

It catalyses the reaction 4-imidazolone-5-propanoate + H2O = N-formimidoyl-L-glutamate. It participates in amino-acid degradation; L-histidine degradation into L-glutamate; N-formimidoyl-L-glutamate from L-histidine: step 3/3. This chain is Probable imidazolonepropionase (amdhd1), found in Xenopus tropicalis (Western clawed frog).